The primary structure comprises 186 residues: Large ribosomal subunit protein uL10 (186 aa).

In terms of assembly, part of the ribosomal stalk of the 50S ribosomal subunit. The N-terminus interacts with L11 and the large rRNA to form the base of the stalk. The C-terminus forms an elongated spine to which L12 dimers bind in a sequential fashion forming a multimeric L10(L12)X complex.

Forms part of the ribosomal stalk, playing a central role in the interaction of the ribosome with GTP-bound translation factors. This Rhodopseudomonas palustris (strain ATCC BAA-98 / CGA009) protein is Large ribosomal subunit protein uL10.